Reading from the N-terminus, the 406-residue chain is Cysteine desulfurase (406 aa).

Position 226 is an N6-(pyridoxal phosphate)lysine (Lys226). Residue Cys364 is the Cysteine persulfide intermediate of the active site.

Belongs to the class-V pyridoxal-phosphate-dependent aminotransferase family. Csd subfamily. In terms of assembly, homodimer. Interacts with SufE and the SufBCD complex composed of SufB, SufC and SufD. The interaction with SufE is required to mediate the direct transfer of the sulfur atom from the S-sulfanylcysteine. Requires pyridoxal 5'-phosphate as cofactor.

Its subcellular location is the cytoplasm. The enzyme catalyses (sulfur carrier)-H + L-cysteine = (sulfur carrier)-SH + L-alanine. It carries out the reaction L-selenocysteine + AH2 = hydrogenselenide + L-alanine + A + H(+). Its pathway is cofactor biosynthesis; iron-sulfur cluster biosynthesis. Cysteine desulfurases mobilize the sulfur from L-cysteine to yield L-alanine, an essential step in sulfur metabolism for biosynthesis of a variety of sulfur-containing biomolecules. Component of the suf operon, which is activated and required under specific conditions such as oxidative stress and iron limitation. Acts as a potent selenocysteine lyase in vitro, that mobilizes selenium from L-selenocysteine. Selenocysteine lyase activity is however unsure in vivo. This is Cysteine desulfurase from Salmonella dublin (strain CT_02021853).